A 444-amino-acid polypeptide reads, in one-letter code: Sperm-associated antigen 4 protein (444 aa).

Residues 1 to 109 are disordered; that stretch reads MRRNPRPGSA…GGASEPSGSP (109 aa). Over residues 19–36 the composition is skewed to low complexity; that stretch reads NFYSENSNSSHSATSGDS. The next 2 helical transmembrane spans lie at 137–159 and 166–188; these read FLSL…LVCV and IRFL…WGLL. The stretch at 204 to 241 forms a coiled coil; it reads LSQYHHRVHSQGQQLQQLQAELSKLHKEVTSVRAAHSE. An SUN domain is found at 267–428; it reads GASIDLEKTS…YRVRAHGVRI (162 aa).

As to quaternary structure, self-associates. Interacts with ODF1. May associate with microtubules. Interacts with SUN3 and SYNE1; suggesting the formation of a LINC complexs; a SUN domain-based heterotrimer of SPAG4 and SUN3 may associate with SYNE1. Interacts with SEPT12 and LMNB1; during spermatogenesis. Testis specific. Exclusively expressed in spermatids.

The protein resides in the membrane. Its subcellular location is the cytoplasm. It localises to the cytoskeleton. It is found in the flagellum axoneme. The protein localises to the nucleus envelope. The protein resides in the nucleus inner membrane. Functionally, involved in spermatogenesis. Required for sperm head formation but not required to establish and maintain general polarity of the sperm head. Required for anchoring and organization of the manchette. Required for targeting of SUN3 and probably SYNE1 through a probable SUN1:SYNE3 LINC complex to the nuclear envelope and involved in accurate posterior sperm head localization of the complex. May anchor SUN3 the nuclear envelope. Involved in maintenance of the nuclear envelope integrity. May assist the organization and assembly of outer dense fibers (ODFs), a specific structure of the sperm tail. The chain is Sperm-associated antigen 4 protein (Spag4) from Rattus norvegicus (Rat).